The sequence spans 646 residues: Lipoteichoic acid synthase (646 aa).

Topologically, residues 1 to 7 (MSLPKKK) are cytoplasmic. The chain crosses the membrane as a helical span at residues 8–28 (IGIFAFFLLTVFTITLKTYFS). The Extracellular segment spans residues 29 to 43 (YYVDFSLGVKGLVQN). A helical transmembrane segment spans residues 44-64 (LILIMNPYSLIALVLSVFLFF). Residues 65–68 (KGKK) are Cytoplasmic-facing. A helical membrane pass occupies residues 69-89 (AFWFIFIGGFLLTFLLYANVV). The Extracellular segment spans residues 90-119 (YFRFFSDFLTFSTLNQAGNVESMGGAVSAS). Residues 120–140 (FKWYDFVYFIDTIIYLAILIF) form a helical membrane-spanning segment. Residues 141–153 (KRKWLDNRAFSKK) lie on the Cytoplasmic side of the membrane. The chain crosses the membrane as a helical span at residues 154–174 (FVPVVMATSVALFFLNLAFAE). Residues 175–646 (TDRPELLTRT…KSGPKGNEKK (472 aa)) are Extracellular-facing. 2 residues coordinate Mn(2+): Glu255 and Thr300. Thr300 is a catalytic residue. His416 serves as a coordination point for substrate. Mn(2+) contacts are provided by Asp475 and His476.

The protein belongs to the LTA synthase family. Proteolytically cleaved.

Its subcellular location is the cell membrane. The protein resides in the secreted. The protein operates within cell wall biogenesis; lipoteichoic acid biosynthesis. Catalyzes the polymerization of lipoteichoic acid (LTA) polyglycerol phosphate, a reaction that presumably uses phosphatidylglycerol (PG) as substrate. Is required for staphylococcal growth and cell division process. This Staphylococcus epidermidis (strain ATCC 12228 / FDA PCI 1200) protein is Lipoteichoic acid synthase (ltaS).